The primary structure comprises 286 residues: 33 kDa chaperonin (286 aa).

Intrachain disulfides connect cysteine 225–cysteine 227 and cysteine 258–cysteine 261.

Belongs to the HSP33 family. In terms of processing, under oxidizing conditions two disulfide bonds are formed involving the reactive cysteines. Under reducing conditions zinc is bound to the reactive cysteines and the protein is inactive.

The protein localises to the cytoplasm. Redox regulated molecular chaperone. Protects both thermally unfolding and oxidatively damaged proteins from irreversible aggregation. Plays an important role in the bacterial defense system toward oxidative stress. This is 33 kDa chaperonin from Shewanella woodyi (strain ATCC 51908 / MS32).